We begin with the raw amino-acid sequence, 228 residues long: Ribose-5-phosphate isomerase A (228 aa).

Residues 28-31 (TGST), 84-87 (DGAD), and 97-100 (KGGG) contribute to the substrate site. Residue E106 is the Proton acceptor of the active site. K124 provides a ligand contact to substrate.

This sequence belongs to the ribose 5-phosphate isomerase family. As to quaternary structure, homodimer.

It catalyses the reaction aldehydo-D-ribose 5-phosphate = D-ribulose 5-phosphate. It participates in carbohydrate degradation; pentose phosphate pathway; D-ribose 5-phosphate from D-ribulose 5-phosphate (non-oxidative stage): step 1/1. In terms of biological role, catalyzes the reversible conversion of ribose-5-phosphate to ribulose 5-phosphate. The protein is Ribose-5-phosphate isomerase A of Levilactobacillus brevis (strain ATCC 367 / BCRC 12310 / CIP 105137 / JCM 1170 / LMG 11437 / NCIMB 947 / NCTC 947) (Lactobacillus brevis).